The chain runs to 343 residues: uncharacterized protein (343 aa).

The next 11 helical transmembrane spans lie at 13–33 (VILYLVGHHLYLIPTTISMCG), 44–64 (LWGYISIITATIFFGISATLD), 71–91 (MHPVTIGAYTYIIAGIFLFFI), 121–141 (ILLLTALLSTVIAPLLFLTGL), 148–168 (NASLILNVEVLFIILLGYLIF), 177–197 (FLGIVLIILGAVYLLTEGDFS), 203–223 (VAVTGNFLVMAAAFFWSLDTV), 244–264 (VGGFVLLIIMLILGINTELPL), 269–289 (YALGVSVFSIGCSFILIYIAI), 296–316 (MVGALFPLSSLFGAIFAFIIL), and 320–340 (FSIMQGISGIVMLTGVFILYW). EamA domains follow at residues 55–192 (IFFG…YLLT) and 216–340 (FFWS…ILYW).

Belongs to the EamA transporter family.

It localises to the cell membrane. This is an uncharacterized protein from Methanothermobacter thermautotrophicus (strain ATCC 29096 / DSM 1053 / JCM 10044 / NBRC 100330 / Delta H) (Methanobacterium thermoautotrophicum).